The following is a 306-amino-acid chain: Ribonuclease HIII (306 aa).

The RNase H type-2 domain occupies 87 to 302; it reads WSVVGSDEVG…TKKAEALAKK (216 aa). Residues aspartate 93, glutamate 94, and aspartate 196 each coordinate a divalent metal cation.

The protein belongs to the RNase HII family. RnhC subfamily. It depends on Mn(2+) as a cofactor. Mg(2+) is required as a cofactor.

It localises to the cytoplasm. The enzyme catalyses Endonucleolytic cleavage to 5'-phosphomonoester.. Its function is as follows. Endonuclease that specifically degrades the RNA of RNA-DNA hybrids. The chain is Ribonuclease HIII from Exiguobacterium sibiricum (strain DSM 17290 / CCUG 55495 / CIP 109462 / JCM 13490 / 255-15).